A 242-amino-acid polypeptide reads, in one-letter code: Tryptophan synthase alpha chain (242 aa).

Catalysis depends on proton acceptor residues Glu32 and Asp43.

It belongs to the TrpA family. In terms of assembly, tetramer of two alpha and two beta chains.

The protein localises to the plastid. It localises to the chloroplast. The enzyme catalyses (1S,2R)-1-C-(indol-3-yl)glycerol 3-phosphate + L-serine = D-glyceraldehyde 3-phosphate + L-tryptophan + H2O. It functions in the pathway amino-acid biosynthesis; L-tryptophan biosynthesis; L-tryptophan from chorismate: step 5/5. The alpha subunit is responsible for the aldol cleavage of indoleglycerol phosphate to indole and glyceraldehyde 3-phosphate. This is Tryptophan synthase alpha chain from Cyanidium caldarium (Red alga).